The following is a 388-amino-acid chain: Glutamine transporter 2 (388 aa).

11 consecutive transmembrane segments (helical) span residues 5-27 (LFGSALILSGTALGAGMLAIPMV), 31-53 (FGLFYSTLLMLIICAGTTYAALL), 86-106 (LFYLLLFCMLIAYILGAADLI), 121-141 (FAQVAFTLFASAFVVCGTQII), 147-167 (LLFFFMISMLVLTLIILIPGM), 186-206 (TSTILFTSFASMPVIPSLVAY), 218-238 (MVILGSIIPLICYLVWLYAVV), 268-288 (IILSIFTSLALLTSFLGVAMA), 302-322 (IVTYVCTFILPLLGAGLAADQ), 326-346 (VLGYAGVILVFLAIFIPLAMV), and 368-388 (GGKLALGLTLLFGLLLLISQI).

Belongs to the amino acid/polyamine transporter 2 family.

It localises to the cell inner membrane. Functionally, seems to be involved in glutamine transport. Complements an E.coli glnP deletion mutant. The sequence is that of Glutamine transporter 2 from Aliivibrio fischeri (strain ATCC 700601 / ES114) (Vibrio fischeri).